Consider the following 181-residue polypeptide: MTATLNQPQVGTGRVVWFTGLSGAGKSTLASALHAELTARGVAVELLDGDAVRENLSKGLGFSKQDRDTNVRRIGFVAGLLAKHGVTVLVSAISPYAETRREVLSTLPNPTEVFVDAPLEVVTERDVKGLYLRALAGEIPHFTGVSDPYEAPQNPDLHLRTDRISVEEGVRQLLAHLGYGA.

Gly20–Ser27 contacts ATP. Catalysis depends on Ser94, which acts as the Phosphoserine intermediate.

It belongs to the APS kinase family.

It catalyses the reaction adenosine 5'-phosphosulfate + ATP = 3'-phosphoadenylyl sulfate + ADP + H(+). Its pathway is sulfur metabolism; hydrogen sulfide biosynthesis; sulfite from sulfate: step 2/3. Functionally, catalyzes the synthesis of activated sulfate. The chain is Adenylyl-sulfate kinase from Deinococcus geothermalis (strain DSM 11300 / CIP 105573 / AG-3a).